The sequence spans 224 residues: Acyl-protein thioesterase 1 (224 aa).

Residues serine 116, aspartate 170, and histidine 203 each act as charge relay system in the active site.

This sequence belongs to the AB hydrolase superfamily. AB hydrolase 2 family.

It is found in the cytoplasm. It localises to the nucleus. The enzyme catalyses S-hexadecanoyl-L-cysteinyl-[protein] + H2O = L-cysteinyl-[protein] + hexadecanoate + H(+). Hydrolyzes fatty acids from S-acylated cysteine residues in proteins with a strong preference for palmitoylated G-alpha proteins over other acyl substrates. Mediates the deacylation of G-alpha proteins such as GPA1 in vivo, but has weak or no activity toward palmitoylated Ras proteins. Has weak lysophospholipase activity in vitro; however such activity may not exist in vivo. The protein is Acyl-protein thioesterase 1 of Schizosaccharomyces pombe (strain 972 / ATCC 24843) (Fission yeast).